We begin with the raw amino-acid sequence, 57 residues long: Large ribosomal subunit protein bL32 (57 aa).

Belongs to the bacterial ribosomal protein bL32 family.

The polypeptide is Large ribosomal subunit protein bL32 (Streptomyces griseus subsp. griseus (strain JCM 4626 / CBS 651.72 / NBRC 13350 / KCC S-0626 / ISP 5235)).